The chain runs to 321 residues: Lipoyl synthase (321 aa).

[4Fe-4S] cluster is bound by residues C68, C73, C79, C94, C98, C101, and S308. The 218-residue stretch at 80-297 folds into the Radical SAM core domain; that stretch reads FNHGTATFMI…KAEAMAMGFT (218 aa).

The protein belongs to the radical SAM superfamily. Lipoyl synthase family. Requires [4Fe-4S] cluster as cofactor.

The protein localises to the cytoplasm. It carries out the reaction [[Fe-S] cluster scaffold protein carrying a second [4Fe-4S](2+) cluster] + N(6)-octanoyl-L-lysyl-[protein] + 2 oxidized [2Fe-2S]-[ferredoxin] + 2 S-adenosyl-L-methionine + 4 H(+) = [[Fe-S] cluster scaffold protein] + N(6)-[(R)-dihydrolipoyl]-L-lysyl-[protein] + 4 Fe(3+) + 2 hydrogen sulfide + 2 5'-deoxyadenosine + 2 L-methionine + 2 reduced [2Fe-2S]-[ferredoxin]. It functions in the pathway protein modification; protein lipoylation via endogenous pathway; protein N(6)-(lipoyl)lysine from octanoyl-[acyl-carrier-protein]: step 2/2. Catalyzes the radical-mediated insertion of two sulfur atoms into the C-6 and C-8 positions of the octanoyl moiety bound to the lipoyl domains of lipoate-dependent enzymes, thereby converting the octanoylated domains into lipoylated derivatives. In Cronobacter sakazakii (strain ATCC BAA-894) (Enterobacter sakazakii), this protein is Lipoyl synthase.